The sequence spans 399 residues: S-adenosylmethionine synthase (399 aa).

Residue His17 participates in ATP binding. Asp19 is a Mg(2+) binding site. Glu45 contributes to the K(+) binding site. Residues Glu58 and Gln101 each coordinate L-methionine. Positions 101–111 (QSPDIAQGVDE) are flexible loop. Residues 177 to 179 (DAK), 244 to 245 (RF), Asp253, 259 to 260 (RK), Ala276, and Lys280 each bind ATP. Asp253 serves as a coordination point for L-methionine. Lys284 contacts L-methionine.

Belongs to the AdoMet synthase family. Homotetramer; dimer of dimers. Mg(2+) serves as cofactor. Requires K(+) as cofactor.

It is found in the cytoplasm. It carries out the reaction L-methionine + ATP + H2O = S-adenosyl-L-methionine + phosphate + diphosphate. Its pathway is amino-acid biosynthesis; S-adenosyl-L-methionine biosynthesis; S-adenosyl-L-methionine from L-methionine: step 1/1. Its function is as follows. Catalyzes the formation of S-adenosylmethionine (AdoMet) from methionine and ATP. The overall synthetic reaction is composed of two sequential steps, AdoMet formation and the subsequent tripolyphosphate hydrolysis which occurs prior to release of AdoMet from the enzyme. The sequence is that of S-adenosylmethionine synthase from Listeria innocua serovar 6a (strain ATCC BAA-680 / CLIP 11262).